Reading from the N-terminus, the 284-residue chain is D-tagatose-1,6-bisphosphate aldolase subunit GatY (284 aa).

The active-site Proton donor is D82. The Zn(2+) site is built by H83 and H180. G181 contacts dihydroxyacetone phosphate. H208 contacts Zn(2+). Residues 209–211 and 230–233 contribute to the dihydroxyacetone phosphate site; these read GAS and NVAT.

This sequence belongs to the class II fructose-bisphosphate aldolase family. TagBP aldolase GatY subfamily. Forms a complex with GatZ. Requires Zn(2+) as cofactor.

It carries out the reaction D-tagatofuranose 1,6-bisphosphate = D-glyceraldehyde 3-phosphate + dihydroxyacetone phosphate. Its pathway is carbohydrate metabolism; D-tagatose 6-phosphate degradation; D-glyceraldehyde 3-phosphate and glycerone phosphate from D-tagatose 6-phosphate: step 2/2. In terms of biological role, catalytic subunit of the tagatose-1,6-bisphosphate aldolase GatYZ, which catalyzes the reversible aldol condensation of dihydroxyacetone phosphate (DHAP or glycerone-phosphate) with glyceraldehyde 3-phosphate (G3P) to produce tagatose 1,6-bisphosphate (TBP). Requires GatZ subunit for full activity and stability. Is involved in the catabolism of galactitol. The sequence is that of D-tagatose-1,6-bisphosphate aldolase subunit GatY (gatY) from Escherichia coli.